The following is a 388-amino-acid chain: Succinate--CoA ligase [ADP-forming] subunit beta (388 aa).

The ATP-grasp domain occupies 9-244 (KEIFRSMGVA…LEEEDPKEIE (236 aa)). ATP is bound by residues lysine 46, 53-55 (GRG), glutamate 99, cysteine 102, and glutamate 107. Residues asparagine 199 and aspartate 213 each contribute to the Mg(2+) site. Residues asparagine 264 and 321–323 (GIM) contribute to the substrate site.

The protein belongs to the succinate/malate CoA ligase beta subunit family. As to quaternary structure, heterotetramer of two alpha and two beta subunits. Requires Mg(2+) as cofactor.

It carries out the reaction succinate + ATP + CoA = succinyl-CoA + ADP + phosphate. It catalyses the reaction GTP + succinate + CoA = succinyl-CoA + GDP + phosphate. Its pathway is carbohydrate metabolism; tricarboxylic acid cycle; succinate from succinyl-CoA (ligase route): step 1/1. Functionally, succinyl-CoA synthetase functions in the citric acid cycle (TCA), coupling the hydrolysis of succinyl-CoA to the synthesis of either ATP or GTP and thus represents the only step of substrate-level phosphorylation in the TCA. The beta subunit provides nucleotide specificity of the enzyme and binds the substrate succinate, while the binding sites for coenzyme A and phosphate are found in the alpha subunit. This Staphylococcus aureus (strain bovine RF122 / ET3-1) protein is Succinate--CoA ligase [ADP-forming] subunit beta.